The sequence spans 337 residues: ERI1 exoribonuclease 3 (337 aa).

In terms of domain architecture, Exonuclease spans 146-320 (FLVLDFEATC…DDCKNIANIM (175 aa)). Residues D150, E152, and D249 each coordinate Mg(2+). E152 acts as the Proton acceptor in catalysis. E152 is a binding site for AMP. The Proton acceptor role is filled by H307. H307 is a binding site for AMP. A Mg(2+)-binding site is contributed by D312.

As to quaternary structure, interacts with PRNP. Mg(2+) serves as cofactor.

This is ERI1 exoribonuclease 3 (ERI3) from Homo sapiens (Human).